The sequence spans 325 residues: Delta(1)-pyrroline-2-carboxylate reductase (325 aa).

The protein belongs to the ornithine cyclodeaminase/mu-crystallin family.

It catalyses the reaction L-proline + NAD(+) = 1-pyrroline-2-carboxylate + NADH + H(+). The catalysed reaction is L-proline + NADP(+) = 1-pyrroline-2-carboxylate + NADPH + H(+). Functionally, catalyzes the reduction of Delta(1)-pyrroline-2-carboxylate (Pyr2C) to L-proline, using preferentially NADPH over NADH as the electron donor. Is likely involved in a degradation pathway that converts trans-3-hydroxy-L-proline (t3LHyp) to L-proline. The protein is Delta(1)-pyrroline-2-carboxylate reductase of Bacillus thuringiensis subsp. konkukian (strain 97-27).